The primary structure comprises 396 residues: Purine ribonucleoside efflux pump NepI (396 aa).

At 1-21 (MSEFIAENRGADAITRPNWSA) the chain is on the cytoplasmic side. A helical transmembrane segment spans residues 22–42 (VFSVAFCVACLIIVEFLPVSL). The Periplasmic segment spans residues 43–54 (LTPMAQDLGISE). The helical transmembrane segment at 55–75 (GVAGQSVTVTAFVAMFASLFI) threads the bilayer. Over 76 to 85 (TQTIQATDRR) the chain is Cytoplasmic. A helical transmembrane segment spans residues 86–106 (YVVILFAVLLTLSCLLVSFAN). Position 107 (S107) is a topological domain, periplasmic. A helical transmembrane segment spans residues 108–128 (FSLLLIGRACLGLALGGFWAM). Residues 129-147 (SASLTMRLVPPRTVPKALS) lie on the Cytoplasmic side of the membrane. A helical transmembrane segment spans residues 148–168 (VIFGAVSIALVIAAPLGSFLG). The Periplasmic segment spans residues 169–175 (ELIGWRN). The helical transmembrane segment at 176–196 (VFNAAAAMGVLCIFWIIKSLP) threads the bilayer. The Cytoplasmic portion of the chain corresponds to 197-215 (SLPGEPSHQKQNTFRLLQR). Residues 216 to 236 (PGVMAGMIAIFMSFAGQFAFF) traverse the membrane as a helical segment. Topologically, residues 237–255 (TYIRPVYMNLAGFGVDGLT) are periplasmic. The helical transmembrane segment at 256–276 (LVLLSFGIASFVGTSLSSFIL) threads the bilayer. Topologically, residues 277 to 281 (KRSVK) are cytoplasmic. A helical membrane pass occupies residues 282 to 302 (LALAGAPFVLALSALVLTLWG). The Periplasmic segment spans residues 303-305 (SDK). The helical transmembrane segment at 306 to 326 (IVATGVAIIWGLTFALIPVGW) threads the bilayer. Residues 327 to 343 (STWITRSLADQAEKAGS) lie on the Cytoplasmic side of the membrane. The chain crosses the membrane as a helical span at residues 344-364 (IQVAVIQLANTCGAAIGGYAL). At 365–366 (DN) the chain is on the periplasmic side. Residues 367–387 (IGLTSPLMLSGTLMLLTALLV) traverse the membrane as a helical segment. Residues 388–396 (TAKVKMKKS) are Cytoplasmic-facing.

The protein belongs to the major facilitator superfamily. DHA1 family. NepI (TC 2.A.1.2.26) subfamily.

The protein resides in the cell inner membrane. It carries out the reaction inosine(in) + H(+)(out) = inosine(out) + H(+)(in). The enzyme catalyses guanosine(in) + H(+)(out) = guanosine(out) + H(+)(in). Functionally, involved in the efflux of purine ribonucleosides, such as inosine and guanosine. The polypeptide is Purine ribonucleoside efflux pump NepI (Escherichia coli O1:K1 / APEC).